The chain runs to 1620 residues: ABC-type organic anion transporter ABCA8A (1620 aa).

7 helical membrane passes run 30 to 50, 224 to 244, 263 to 283, 294 to 314, 328 to 348, 357 to 377, and 397 to 417; these read TFLE…FLQL, CFLF…SAGV, SAFW…VTLL, VFLT…LSLI, FLTD…GFTA, LEWL…VQLL, and IGTI…TFYF. N-linked (GlcNAc...) asparagine glycosylation is found at Asn454 and Asn482. The ABC transporter 1 domain occupies 478 to 713; that stretch reads IRIRNLTKDY…WGIGYHLSLQ (236 aa). Residue 514–521 participates in ATP binding; that stretch reads GHSGAGKS. The chain crosses the membrane as a helical span at residues 861 to 881; the sequence is IVILILVLGIGLLHILSANIY. N-linked (GlcNAc...) asparagine glycosylation is present at Asn967. Helical transmembrane passes span 979–999, 1019–1039, 1068–1088, 1105–1125, 1133–1153, 1159–1179, and 1196–1216; these read CFPV…APSA, YLAY…YISM, ALFE…AFYA, ILYV…ISFI, SGLW…FMLI, ISLF…CTLL, and EYSY…VVIL. Residues 1284-1517 enclose the ABC transporter 2 domain; it reads LRKEYKGKKK…FGKEYLLEMK (234 aa). An ATP-binding site is contributed by 1322–1329; sequence GHNGAGKS.

This sequence belongs to the ABC transporter superfamily. ABCA family. In terms of tissue distribution, expressed in lung, heart, liver, skeletal muscle and testis. Highly expressed in the liver, and is also abundant in heart and skeletal muscle. Highly expressed in heart.

The protein localises to the cell membrane. It is found in the basolateral cell membrane. It carries out the reaction taurocholate(in) + ATP + H2O = taurocholate(out) + ADP + phosphate + H(+). The enzyme catalyses cholesterol(in) + ATP + H2O = cholesterol(out) + ADP + phosphate + H(+). Its activity is regulated as follows. Cholesterol efflux is increased by extracellularly applied taurocholate. Mediates cholesterol and taurocholate efflux. Through the interaction with ABCA1 potentiates the cholesterol efflux to lipid-free APOA1, in turn regulates high-density lipoprotein cholesterol levels. The chain is ABC-type organic anion transporter ABCA8A from Mus musculus (Mouse).